Here is a 310-residue protein sequence, read N- to C-terminus: tRNA-cytidine(32) 2-sulfurtransferase (310 aa).

The PP-loop motif motif lies at S47 to S52. 3 residues coordinate [4Fe-4S] cluster: C122, C125, and C213.

Belongs to the TtcA family. As to quaternary structure, homodimer. Mg(2+) serves as cofactor. The cofactor is [4Fe-4S] cluster.

It localises to the cytoplasm. The catalysed reaction is cytidine(32) in tRNA + S-sulfanyl-L-cysteinyl-[cysteine desulfurase] + AH2 + ATP = 2-thiocytidine(32) in tRNA + L-cysteinyl-[cysteine desulfurase] + A + AMP + diphosphate + H(+). It functions in the pathway tRNA modification. Catalyzes the ATP-dependent 2-thiolation of cytidine in position 32 of tRNA, to form 2-thiocytidine (s(2)C32). The sulfur atoms are provided by the cysteine/cysteine desulfurase (IscS) system. The polypeptide is tRNA-cytidine(32) 2-sulfurtransferase (Haemophilus influenzae (strain 86-028NP)).